Consider the following 473-residue polypeptide: Photosystem II CP43 reaction center protein (473 aa).

Residues 1-14 (MKTLYSLRRFYPVE) constitute a propeptide that is removed on maturation. N-acetylthreonine is present on Thr15. Thr15 is modified (phosphothreonine). 5 helical membrane-spanning segments follow: residues 69-93 (LFEVAHFVPEKPMYEQGLILLPHLA), 134-155 (LIGPETLEESFPFFGYVWKDRN), 178-200 (KALYFGGIYDTWAPGGGDVRKIT), 255-275 (KPFAWARRAFVWSGEAYLSYS), and 291-312 (WFNNTAYPSEFYGPTGPEASQA). Position 367 (Glu367) interacts with [CaMn4O5] cluster. A helical transmembrane segment spans residues 447–471 (RARAAAAGFEKGIDRDFEPVLSMTP).

It belongs to the PsbB/PsbC family. PsbC subfamily. PSII is composed of 1 copy each of membrane proteins PsbA, PsbB, PsbC, PsbD, PsbE, PsbF, PsbH, PsbI, PsbJ, PsbK, PsbL, PsbM, PsbT, PsbX, PsbY, PsbZ, Psb30/Ycf12, at least 3 peripheral proteins of the oxygen-evolving complex and a large number of cofactors. It forms dimeric complexes. Binds multiple chlorophylls and provides some of the ligands for the Ca-4Mn-5O cluster of the oxygen-evolving complex. It may also provide a ligand for a Cl- that is required for oxygen evolution. PSII binds additional chlorophylls, carotenoids and specific lipids. is required as a cofactor.

It is found in the plastid. Its subcellular location is the chloroplast thylakoid membrane. Functionally, one of the components of the core complex of photosystem II (PSII). It binds chlorophyll and helps catalyze the primary light-induced photochemical processes of PSII. PSII is a light-driven water:plastoquinone oxidoreductase, using light energy to abstract electrons from H(2)O, generating O(2) and a proton gradient subsequently used for ATP formation. The sequence is that of Photosystem II CP43 reaction center protein from Cryptomeria japonica (Japanese cedar).